A 329-amino-acid chain; its full sequence is Probable ABC transporter permease protein MG188 (329 aa).

A run of 6 helical transmembrane segments spans residues 30–50 (FLLF…PFFL), 96–116 (LISL…IVFV), 128–148 (VFFL…VYIF), 176–196 (ALWA…VLII), 234–254 (LIFL…LALF), and 283–303 (NLAG…GLVL). Residues 88–303 (LRNSFLYSLI…VLGVCYGLVL (216 aa)) form the ABC transmembrane type-1 domain.

The protein belongs to the binding-protein-dependent transport system permease family. MalFG subfamily.

Its subcellular location is the cell membrane. Probably part of a binding-protein-dependent transport system. Probably responsible for the translocation of the substrate across the membrane. In Mycoplasma genitalium (strain ATCC 33530 / DSM 19775 / NCTC 10195 / G37) (Mycoplasmoides genitalium), this protein is Probable ABC transporter permease protein MG188.